A 143-amino-acid chain; its full sequence is MSNSTMEATQMKVKLAVDEMIDDLDKTYLRDMQKSMFQCSARCCDNKKTTRDAVENCVESCNDGMKKAQGYLEKELGGLQDQLSRCAMTCYDKLVQQFGPDVNKYSESQKLSFNEKLDSCVSVCADDHIKLIPAIKKRFAKNT.

It belongs to the FAM136 family.

It is found in the cytoplasm. In terms of biological role, may play a role in locomotion and behavior. This is FAM161 homolog famh-136 from Caenorhabditis elegans.